Consider the following 220-residue polypeptide: Small ribosomal subunit protein uS3c (220 aa).

Residues 43–120 enclose the KH type-2 domain; sequence IQHYVEKNTR…RLNIAIIRVA (78 aa).

Belongs to the universal ribosomal protein uS3 family. As to quaternary structure, part of the 30S ribosomal subunit.

It localises to the plastid. It is found in the chloroplast. The chain is Small ribosomal subunit protein uS3c (rps3) from Piper cenocladum (Ant piper).